Reading from the N-terminus, the 188-residue chain is Guanylate kinase (188 aa).

Positions 8–188 constitute a Guanylate kinase-like domain; the sequence is GRIVVLAGPS…AVAAISEILR (181 aa). 15–22 is a binding site for ATP; it reads GPSAVGKS.

Belongs to the guanylate kinase family.

The protein resides in the cytoplasm. The enzyme catalyses GMP + ATP = GDP + ADP. Functionally, essential for recycling GMP and indirectly, cGMP. This chain is Guanylate kinase, found in Corynebacterium jeikeium (strain K411).